The chain runs to 157 residues: SsrA-binding protein (157 aa).

Belongs to the SmpB family.

It localises to the cytoplasm. Functionally, required for rescue of stalled ribosomes mediated by trans-translation. Binds to transfer-messenger RNA (tmRNA), required for stable association of tmRNA with ribosomes. tmRNA and SmpB together mimic tRNA shape, replacing the anticodon stem-loop with SmpB. tmRNA is encoded by the ssrA gene; the 2 termini fold to resemble tRNA(Ala) and it encodes a 'tag peptide', a short internal open reading frame. During trans-translation Ala-aminoacylated tmRNA acts like a tRNA, entering the A-site of stalled ribosomes, displacing the stalled mRNA. The ribosome then switches to translate the ORF on the tmRNA; the nascent peptide is terminated with the 'tag peptide' encoded by the tmRNA and targeted for degradation. The ribosome is freed to recommence translation, which seems to be the essential function of trans-translation. The protein is SsrA-binding protein of Aquifex aeolicus (strain VF5).